A 577-amino-acid polypeptide reads, in one-letter code: Sensor histidine kinase YesM (577 aa).

Topologically, residues 1-17 are cytoplasmic; it reads MKKRVAGWYRRMKIKDK. The chain crosses the membrane as a helical span at residues 18–38; that stretch reads LFVFLSLIMAVSFLFVYSGVQ. Residues 39–286 are Extracellular-facing; the sequence is YAFHVYDEQI…PFDQMFAKIS (248 aa). Residues 287-307 form a helical membrane-spanning segment; it reads FMKTVIGTCFLLFFCVVLLFG. Topologically, residues 308–577 are cytoplasmic; sequence RKIANSITEP…ITIPCRNEVV (270 aa). The region spanning 312–368 is the HAMP domain; sequence NSITEPIEQLVTAMKSVQHSGIEAGVSLSLPEHTQDEAGMLNRHFTVMMKRINELME. The Histidine kinase domain maps to 365 to 574; sequence ELMEENVEKQ…RIVITIPCRN (210 aa). Phosphohistidine; by autocatalysis is present on H392.

The protein resides in the cell membrane. It catalyses the reaction ATP + protein L-histidine = ADP + protein N-phospho-L-histidine.. Member of the two-component regulatory system YesM/YesN. Probably activates YesN by phosphorylation. This chain is Sensor histidine kinase YesM (yesM), found in Bacillus subtilis (strain 168).